A 319-amino-acid chain; its full sequence is Sulfate adenylyltransferase subunit 2 (319 aa).

It belongs to the PAPS reductase family. CysD subfamily. In terms of assembly, heterodimer composed of CysD, the smaller subunit, and CysN.

It carries out the reaction sulfate + ATP + H(+) = adenosine 5'-phosphosulfate + diphosphate. The protein operates within sulfur metabolism; hydrogen sulfide biosynthesis; sulfite from sulfate: step 1/3. In terms of biological role, with CysN forms the ATP sulfurylase (ATPS) that catalyzes the adenylation of sulfate producing adenosine 5'-phosphosulfate (APS) and diphosphate, the first enzymatic step in sulfur assimilation pathway. APS synthesis involves the formation of a high-energy phosphoric-sulfuric acid anhydride bond driven by GTP hydrolysis by CysN coupled to ATP hydrolysis by CysD. The chain is Sulfate adenylyltransferase subunit 2 from Methylobacterium radiotolerans (strain ATCC 27329 / DSM 1819 / JCM 2831 / NBRC 15690 / NCIMB 10815 / 0-1).